We begin with the raw amino-acid sequence, 119 residues long: Ribonuclease P protein component (119 aa).

Belongs to the RnpA family. In terms of assembly, consists of a catalytic RNA component (M1 or rnpB) and a protein subunit.

It carries out the reaction Endonucleolytic cleavage of RNA, removing 5'-extranucleotides from tRNA precursor.. Its function is as follows. RNaseP catalyzes the removal of the 5'-leader sequence from pre-tRNA to produce the mature 5'-terminus. It can also cleave other RNA substrates such as 4.5S RNA. The protein component plays an auxiliary but essential role in vivo by binding to the 5'-leader sequence and broadening the substrate specificity of the ribozyme. This chain is Ribonuclease P protein component, found in Streptococcus equi subsp. zooepidemicus (strain MGCS10565).